The chain runs to 466 residues: Argininosuccinate lyase (466 aa).

It belongs to the lyase 1 family. Argininosuccinate lyase subfamily.

Its subcellular location is the cytoplasm. The enzyme catalyses 2-(N(omega)-L-arginino)succinate = fumarate + L-arginine. The protein operates within amino-acid biosynthesis; L-arginine biosynthesis; L-arginine from L-ornithine and carbamoyl phosphate: step 3/3. This Brucella abortus (strain S19) protein is Argininosuccinate lyase.